Consider the following 124-residue polypeptide: Large ribosomal subunit protein bL12 (124 aa).

Basic and acidic residues predominate over residues 102–116; the sequence is MSKEDAEAAKTKLEE. Residues 102 to 124 are disordered; the sequence is MSKEDAEAAKTKLEEAGASVELK.

It belongs to the bacterial ribosomal protein bL12 family. In terms of assembly, homodimer. Part of the ribosomal stalk of the 50S ribosomal subunit. Forms a multimeric L10(L12)X complex, where L10 forms an elongated spine to which 2 to 4 L12 dimers bind in a sequential fashion. Binds GTP-bound translation factors.

Forms part of the ribosomal stalk which helps the ribosome interact with GTP-bound translation factors. Is thus essential for accurate translation. This chain is Large ribosomal subunit protein bL12, found in Chromohalobacter salexigens (strain ATCC BAA-138 / DSM 3043 / CIP 106854 / NCIMB 13768 / 1H11).